A 513-amino-acid polypeptide reads, in one-letter code: Gluconokinase (513 aa).

ATP contacts are provided by residues K16, T261, G300, and G412–S416.

Belongs to the FGGY kinase family.

It carries out the reaction D-gluconate + ATP = 6-phospho-D-gluconate + ADP + H(+). It participates in carbohydrate acid metabolism; D-gluconate degradation. Its activity is regulated as follows. Catabolite repression by gluconate. The polypeptide is Gluconokinase (gntK) (Bacillus licheniformis).